The sequence spans 333 residues: Glyceraldehyde-3-phosphate dehydrogenase 1 (333 aa).

NAD(+) is bound by residues 12–13 (RI), D35, and R79. D-glyceraldehyde 3-phosphate contacts are provided by residues 152–154 (SCT), T183, R198, 211–212 (SG), and R234. The active-site Nucleophile is the C153. N314 is an NAD(+) binding site.

This sequence belongs to the glyceraldehyde-3-phosphate dehydrogenase family. Homotetramer.

It is found in the cytoplasm. The enzyme catalyses D-glyceraldehyde 3-phosphate + phosphate + NAD(+) = (2R)-3-phospho-glyceroyl phosphate + NADH + H(+). The protein operates within carbohydrate degradation; glycolysis; pyruvate from D-glyceraldehyde 3-phosphate: step 1/5. Its activity is regulated as follows. Resistant to pentalenolactone (PL). Functionally, catalyzes the oxidative phosphorylation of glyceraldehyde 3-phosphate (G3P) to 1,3-bisphosphoglycerate (BPG) using the cofactor NAD. The first reaction step involves the formation of a hemiacetal intermediate between G3P and a cysteine residue, and this hemiacetal intermediate is then oxidized to a thioester, with concomitant reduction of NAD to NADH. The reduced NADH is then exchanged with the second NAD, and the thioester is attacked by a nucleophilic inorganic phosphate to produce BPG. The polypeptide is Glyceraldehyde-3-phosphate dehydrogenase 1 (gap1) (Streptomyces arenae).